Here is a 75-residue protein sequence, read N- to C-terminus: MATEKFETALKKLEEIVRRLEGGSLSLDESLKAFEEGVRHASFCSKKLDEAERRVEVLLKRKDGSFSREPFQPDE.

The protein belongs to the XseB family. In terms of assembly, heterooligomer composed of large and small subunits.

The protein resides in the cytoplasm. It carries out the reaction Exonucleolytic cleavage in either 5'- to 3'- or 3'- to 5'-direction to yield nucleoside 5'-phosphates.. Bidirectionally degrades single-stranded DNA into large acid-insoluble oligonucleotides, which are then degraded further into small acid-soluble oligonucleotides. This Pelobacter propionicus (strain DSM 2379 / NBRC 103807 / OttBd1) protein is Exodeoxyribonuclease 7 small subunit.